The following is a 399-amino-acid chain: uncharacterized protein (399 aa).

10 helical membrane passes run 7–27 (FSAL…LYLI), 33–53 (FLQI…FEVP), 79–99 (AFFP…IWAL), 131–151 (LLIT…SLNI), 153–173 (FPFL…SVFI), 208–228 (VLLI…ISRY), 242–262 (SLGY…TLTI), 296–316 (PLGI…HPIV), 335–355 (LNSG…GIIS), and 357–377 (AFGL…PIIL).

This sequence belongs to the major facilitator superfamily. Drug:H(+) antiporter-3 (DHA3) (TC 2.A.1.21) family.

Its subcellular location is the cell membrane. This is an uncharacterized protein from Bacillus subtilis (strain 168).